The chain runs to 107 residues: Small ribosomal subunit protein uS17 (107 aa).

It belongs to the universal ribosomal protein uS17 family. In terms of assembly, part of the 30S ribosomal subunit.

In terms of biological role, one of the primary rRNA binding proteins, it binds specifically to the 5'-end of 16S ribosomal RNA. This is Small ribosomal subunit protein uS17 from Thermotoga sp. (strain RQ2).